A 194-amino-acid chain; its full sequence is Accessory gene regulator protein B (194 aa).

Transmembrane regions (helical) follow at residues 44-64, 80-100, 107-127, 142-162, and 163-183; these read IVVY…LTHL, SSLL…YLII, FVLL…APAA, KILS…TKEP, and VNKL…PIFF.

Belongs to the AgrB family.

It localises to the cell membrane. Its function is as follows. Essential for the production of a quorum sensing system signal molecule, the autoinducing peptide (AIP). This quorum sensing system is responsible for the regulation of the expression of virulence factor genes. Involved in the proteolytic processing of AgrD, the precursor of AIP. This Staphylococcus epidermidis protein is Accessory gene regulator protein B.